The chain runs to 568 residues: TWiK family of potassium channels protein 9 (568 aa).

The Cytoplasmic portion of the chain corresponds to 1–15; it reads MKCSFHIPEKYQWAS. Residues 16-36 traverse the membrane as a helical segment; the sequence is TLFVHVALIAGVAVYTVFGAL. Positions 163–183 form an intramembrane region, pore-forming; it reads IGNSVIFAFTVITTIGYGHVA. Residues 191 to 211 form a helical membrane-spanning segment; it reads LFLIFYGVIGVPFTLLTIADL. Residues 212–316 lie on the Cytoplasmic side of the membrane; the sequence is GMFLTRFLKN…NNEPRKTEES (105 aa). 2 disordered regions span residues 243–262 and 274–314; these read QRNKSQKTSPVMPDSERSEV and MRTA…RKTE. The span at 297-307 shows a compositional bias: acidic residues; the sequence is GKEEDEEEPEN. A helical transmembrane segment spans residues 317 to 337; the sequence is IALGITFTCYLVAGAKILSVY. An intramembrane region (pore-forming) is located at residues 343–363; it reads FFKALYFNFVTLTTIGLGDFV. A helical transmembrane segment spans residues 370-390; sequence LLITLIYIGIGLALTTMAIEI. The Cytoplasmic portion of the chain corresponds to 391 to 568; the sequence is AADLLKKLHY…LRTYTNARRK (178 aa).

It belongs to the two pore domain potassium channel (TC 1.A.1.8) family. In terms of tissue distribution, expressed in ray A-type neurons and cell bodies. Also seen in head, pharyngeal and phasmid neurons, and in coelomocytes.

It is found in the membrane. Functionally, potassium channel protein that may be component of regulatory network that controls ray development and function. This Caenorhabditis elegans protein is TWiK family of potassium channels protein 9 (twk-9).